Consider the following 431-residue polypeptide: Tol-Pal system protein TolB (431 aa).

The first 26 residues, Met1 to Ala26, serve as a signal peptide directing secretion. The disordered stretch occupies residues Pro411–Gln431.

It belongs to the TolB family. In terms of assembly, the Tol-Pal system is composed of five core proteins: the inner membrane proteins TolA, TolQ and TolR, the periplasmic protein TolB and the outer membrane protein Pal. They form a network linking the inner and outer membranes and the peptidoglycan layer.

It is found in the periplasm. Its function is as follows. Part of the Tol-Pal system, which plays a role in outer membrane invagination during cell division and is important for maintaining outer membrane integrity. The polypeptide is Tol-Pal system protein TolB (Burkholderia ambifaria (strain MC40-6)).